We begin with the raw amino-acid sequence, 90 residues long: Cell division topological specificity factor (90 aa).

It belongs to the MinE family.

Its function is as follows. Prevents the cell division inhibition by proteins MinC and MinD at internal division sites while permitting inhibition at polar sites. This ensures cell division at the proper site by restricting the formation of a division septum at the midpoint of the long axis of the cell. In Bordetella avium (strain 197N), this protein is Cell division topological specificity factor.